The following is a 694-amino-acid chain: Elongation factor G (694 aa).

In terms of domain architecture, tr-type G spans E8 to T287. GTP is bound by residues A17–T24, D86–H90, and N140–D143.

This sequence belongs to the TRAFAC class translation factor GTPase superfamily. Classic translation factor GTPase family. EF-G/EF-2 subfamily.

Its subcellular location is the cytoplasm. Its function is as follows. Catalyzes the GTP-dependent ribosomal translocation step during translation elongation. During this step, the ribosome changes from the pre-translocational (PRE) to the post-translocational (POST) state as the newly formed A-site-bound peptidyl-tRNA and P-site-bound deacylated tRNA move to the P and E sites, respectively. Catalyzes the coordinated movement of the two tRNA molecules, the mRNA and conformational changes in the ribosome. This chain is Elongation factor G, found in Brucella abortus (strain S19).